The primary structure comprises 223 residues: Putative germin-like protein subfamily 1 member 12 (223 aa).

A signal peptide spans 1–24; it reads MNMKNLYLAILYLLAASTLPFAIA. Cysteine 34 and cysteine 51 are disulfide-bonded. The 152-residue stretch at 65–216 folds into the Cupin type-1 domain; the sequence is SGLDKARTTE…AFQLDPKVII (152 aa). An N-linked (GlcNAc...) asparagine glycan is attached at asparagine 81. Histidine 114, histidine 116, and glutamate 121 together coordinate Mn(2+). The N-linked (GlcNAc...) asparagine glycan is linked to asparagine 145. Histidine 162 is a binding site for Mn(2+).

This sequence belongs to the germin family. Oligomer (believed to be a pentamer but probably hexamer).

It is found in the secreted. Its subcellular location is the extracellular space. It localises to the apoplast. Functionally, may play a role in plant defense. Probably has no oxalate oxidase activity even if the active site is conserved. In Arabidopsis thaliana (Mouse-ear cress), this protein is Putative germin-like protein subfamily 1 member 12.